The chain runs to 385 residues: S-adenosylmethionine synthase (385 aa).

Residue His-16 coordinates ATP. Asp-18 provides a ligand contact to Mg(2+). Position 44 (Glu-44) interacts with K(+). L-methionine-binding residues include Glu-57 and Gln-100. Positions Gln-100–Arg-110 are flexible loop. Residues Asp-164–Lys-166, Lys-230–Phe-231, Asp-239, Arg-245–Lys-246, Ala-262, and Lys-266 contribute to the ATP site. Residue Asp-239 coordinates L-methionine. An L-methionine-binding site is contributed by Lys-270.

Belongs to the AdoMet synthase family. Homotetramer; dimer of dimers. It depends on Mg(2+) as a cofactor. K(+) is required as a cofactor.

Its subcellular location is the cytoplasm. The catalysed reaction is L-methionine + ATP + H2O = S-adenosyl-L-methionine + phosphate + diphosphate. Its pathway is amino-acid biosynthesis; S-adenosyl-L-methionine biosynthesis; S-adenosyl-L-methionine from L-methionine: step 1/1. Its function is as follows. Catalyzes the formation of S-adenosylmethionine (AdoMet) from methionine and ATP. The overall synthetic reaction is composed of two sequential steps, AdoMet formation and the subsequent tripolyphosphate hydrolysis which occurs prior to release of AdoMet from the enzyme. The chain is S-adenosylmethionine synthase from Helicobacter pylori (strain HPAG1).